The following is a 456-amino-acid chain: MTLRPQLARYKDKTMTSVSFYEYSKLNAEEKAALLRRSETDISGFIEKVAPILEAVRTEGDKALARFGRELDKADVTEANLKVTAAEFDAAFKLVDASVLESVQFGIDNIRKFHEEQKPEAMWLKEIRPGAFAGDRFTPIQSVALYVPRGKGSFPSVTMMTSVPAVVAGVPNLAIVTPPAPDGSVDAATLVAARLAGVETVYKAGGAQAVAAVAYGTETVKPALKIVGPGSPWVVAAKRSLSGVIDTGLPAGPSEVMILADDTVHGGLAALDLLIEAEHGPDSSAYLVTHSGRVAEEALAALPEHWARMTEQRTAFSKTVLSGKTGGIVLTSSIEESYEFVNAYAPEHLELLSEQPFIHLGHITEASEILMGTHTPVSIANFSLGPNAVLPTSRWARTFGPLSVTDFVKRSSIGYVTAPAYPEFARHSHNLAIYEGFSSHALAVSPVRDAYLKKGA.

His-279 serves as a coordination point for Zn(2+). Residues Glu-347 and His-348 each act as proton acceptor in the active site. His-440 provides a ligand contact to Zn(2+).

The protein belongs to the histidinol dehydrogenase family. Zn(2+) is required as a cofactor.

The protein is Histidinol dehydrogenase homolog of Rhizobium meliloti (strain 1021) (Ensifer meliloti).